Reading from the N-terminus, the 989-residue chain is ATP-dependent 6-phosphofructokinase subunit alpha (989 aa).

The interval Met-1–Lys-585 is N-terminal catalytic PFK domain 1. Residues Gly-220, Arg-283–Ser-284, and Gly-313–Ser-316 contribute to the ATP site. Asp-314 contacts Mg(2+). Residues Ser-359–Asp-361, Arg-396, Met-403–Arg-405, Glu-460, Arg-487, and His-493–Arg-496 each bind beta-D-fructose 6-phosphate. The active-site Proton acceptor is the Asp-361. The interdomain linker stretch occupies residues Tyr-586–Leu-599. The tract at residues Asn-600–Thr-989 is C-terminal regulatory PFK domain 2. Beta-D-fructose 2,6-bisphosphate-binding positions include Arg-670, Thr-727–Asn-731, Arg-765, Gln-772–Gly-774, Glu-832, Arg-858, His-864–Gln-867, and Arg-963.

This sequence belongs to the phosphofructokinase type A (PFKA) family. ATP-dependent PFK group I subfamily. Eukaryotic two domain clade 'E' sub-subfamily. Heterododecamer of 4 alpha, 4 beta and 4 gamma chains. The gamma chain bridges the N-terminal halves of the alpha and beta subunits. Mg(2+) serves as cofactor.

The protein localises to the cytoplasm. It carries out the reaction beta-D-fructose 6-phosphate + ATP = beta-D-fructose 1,6-bisphosphate + ADP + H(+). The protein operates within carbohydrate degradation; glycolysis; D-glyceraldehyde 3-phosphate and glycerone phosphate from D-glucose: step 3/4. Its activity is regulated as follows. Allosterically activated by ADP, AMP, or fructose 2,6-bisphosphate, and allosterically inhibited by ATP or citrate. Its function is as follows. Catalyzes the phosphorylation of D-fructose 6-phosphate to fructose 1,6-bisphosphate by ATP, the first committing step of glycolysis. Involved in the modulation of glucose-induced microautophagy of peroxisomes independent of its ability to metabolize glucose intermediates. The chain is ATP-dependent 6-phosphofructokinase subunit alpha (PFK1) from Komagataella phaffii (strain GS115 / ATCC 20864) (Yeast).